The chain runs to 507 residues: Chromosomal replication initiator protein DnaA (507 aa).

Positions 1 to 112 (MTDDPGSGFT…PATDEADDTT (112 aa)) are domain I, interacts with DnaA modulators. The segment at 99-162 (RIAPPATDEA…ERPRNTDSAT (64 aa)) is disordered. Polar residues predominate over residues 113 to 127 (VPPSENPATTSPDTT). The interval 113-166 (VPPSENPATTSPDTTTDNDEIDDSAAARGDNQHSWPSYFTERPRNTDSATAGVT) is domain II. Residues 167–383 (SLNRRYTFDT…GALIRVTAFA (217 aa)) form a domain III, AAA+ region region. ATP is bound by residues glycine 211, glycine 213, lysine 214, and threonine 215. The segment at 384–507 (SLNKTPIDKA…TTRIRQRSKR (124 aa)) is domain IV, binds dsDNA.

Belongs to the DnaA family. As to quaternary structure, oligomerizes as a right-handed, spiral filament on DNA at oriC.

The protein localises to the cytoplasm. In terms of biological role, plays an essential role in the initiation and regulation of chromosomal replication. ATP-DnaA binds to the origin of replication (oriC) to initiate formation of the DNA replication initiation complex once per cell cycle. Binds the DnaA box (a 9 base pair repeat at the origin) and separates the double-stranded (ds)DNA. Forms a right-handed helical filament on oriC DNA; dsDNA binds to the exterior of the filament while single-stranded (ss)DNA is stabiized in the filament's interior. The ATP-DnaA-oriC complex binds and stabilizes one strand of the AT-rich DNA unwinding element (DUE), permitting loading of DNA polymerase. After initiation quickly degrades to an ADP-DnaA complex that is not apt for DNA replication. Binds acidic phospholipids. The sequence is that of Chromosomal replication initiator protein DnaA from Mycobacterium bovis (strain BCG / Tokyo 172 / ATCC 35737 / TMC 1019).